We begin with the raw amino-acid sequence, 793 residues long: Potassium transporter 18 (793 aa).

Over Met1 to Ser53 the chain is Cytoplasmic. A helical membrane pass occupies residues Leu54–Pro74. Over His75–Ala86 the chain is Extracellular. Residues Leu87–Leu107 traverse the membrane as a helical segment. At Arg108–Asn172 the chain is on the cytoplasmic side. Residues Leu173–Pro193 traverse the membrane as a helical segment. Over Ala194–Asp214 the chain is Extracellular. Residues Val215–Thr235 traverse the membrane as a helical segment. Residues Asp236–Lys237 are Cytoplasmic-facing. Residues Val238–Ala258 traverse the membrane as a helical segment. Residues Val259–Ser287 lie on the Extracellular side of the membrane. The chain crosses the membrane as a helical span at residues Trp288–Leu308. Position 309 (Ser309) is a topological domain, cytoplasmic. Residues Tyr310–Leu330 form a helical membrane-spanning segment. Topologically, residues Gln331–Tyr351 are extracellular. Residues Ile352–Val372 traverse the membrane as a helical segment. Residues Ala373–Gln409 lie on the Cytoplasmic side of the membrane. Residues Ile410–Phe430 traverse the membrane as a helical segment. Residues Lys431–Thr442 are Extracellular-facing. The N-linked (GlcNAc...) asparagine glycan is linked to Asn432. Residues Ala443–Trp463 form a helical membrane-spanning segment. The Cytoplasmic segment spans residues Arg464–Thr468. The helical transmembrane segment at Leu469–Val489 threads the bilayer. The Extracellular segment spans residues Arg490–Gln494. The chain crosses the membrane as a helical span at residues Gly495 to Tyr515. Over Gly516–Val793 the chain is Cytoplasmic.

The protein belongs to the HAK/KUP transporter (TC 2.A.72.3) family.

It is found in the membrane. Functionally, high-affinity potassium transporter. This chain is Potassium transporter 18 (HAK18), found in Oryza sativa subsp. japonica (Rice).